Here is a 119-residue protein sequence, read N- to C-terminus: Ubiquinone biosynthesis accessory factor UbiK (119 aa).

The stretch at 79–99 (LLRTREKLALLEQRLSELEAR) forms a coiled coil. The segment covering 96-106 (LEARDKPEEVK) has biased composition (basic and acidic residues). Residues 96 to 119 (LEARDKPEEVKPAPAIPPVDPQQE) are disordered. Pro residues predominate over residues 109-119 (PAIPPVDPQQE).

The protein belongs to the UbiK family. In terms of assembly, homotrimer.

Its subcellular location is the cytoplasm. Its pathway is cofactor biosynthesis; ubiquinone biosynthesis. Functionally, required for efficient ubiquinone (coenzyme Q) biosynthesis under aerobic conditions. UbiK is probably an accessory factor of Ubi enzymes and facilitates ubiquinone biosynthesis by acting as an assembly factor, a targeting factor, or both. Dispensable for ubiquinone biosynthesis under anaerobiosis. Required for proliferation in macrophages and virulence in mice. Significantly contributes to colonization and invasion as well as host inflammation and innate immunity after infection. In vitro, has membrane fusogenic activity at acidic pH. This Salmonella typhimurium (strain LT2 / SGSC1412 / ATCC 700720) protein is Ubiquinone biosynthesis accessory factor UbiK.